The following is a 351-amino-acid chain: Serine/threonine-protein kinase mos (351 aa).

Residues 71–340 (FSIDGVIGSG…ERRTDDTENL (270 aa)) enclose the Protein kinase domain. ATP contacts are provided by residues 77-85 (IGSGGFGSV) and Lys-98. Asp-194 functions as the Proton acceptor in the catalytic mechanism.

Belongs to the protein kinase superfamily. Ser/Thr protein kinase family.

The catalysed reaction is L-seryl-[protein] + ATP = O-phospho-L-seryl-[protein] + ADP + H(+). The enzyme catalyses L-threonyl-[protein] + ATP = O-phospho-L-threonyl-[protein] + ADP + H(+). Its function is as follows. Suppresses the mitotic cell cycle in oocytes, forcing them to undergo meiosis II to produce haploid gametes. Acts as a MAPK kinase kinase (MAP3K) that acts upstream of MAP kinase in oocytes. This Patiria pectinifera (Starfish) protein is Serine/threonine-protein kinase mos.